The chain runs to 207 residues: ATP-dependent Clp protease proteolytic subunit (207 aa).

The active-site Nucleophile is the serine 111. Residue histidine 136 is part of the active site.

It belongs to the peptidase S14 family. In terms of assembly, fourteen ClpP subunits assemble into 2 heptameric rings which stack back to back to give a disk-like structure with a central cavity, resembling the structure of eukaryotic proteasomes. Component of the ClpAP and ClpXP complexes.

Its subcellular location is the cytoplasm. It carries out the reaction Hydrolysis of proteins to small peptides in the presence of ATP and magnesium. alpha-casein is the usual test substrate. In the absence of ATP, only oligopeptides shorter than five residues are hydrolyzed (such as succinyl-Leu-Tyr-|-NHMec, and Leu-Tyr-Leu-|-Tyr-Trp, in which cleavage of the -Tyr-|-Leu- and -Tyr-|-Trp bonds also occurs).. Its function is as follows. Cleaves peptides in various proteins in a process that requires ATP hydrolysis. Has a chymotrypsin-like activity. Plays a major role in the degradation of misfolded proteins. This Salmonella enteritidis PT4 (strain P125109) protein is ATP-dependent Clp protease proteolytic subunit.